A 156-amino-acid polypeptide reads, in one-letter code: Endoribonuclease YbeY (156 aa).

Zn(2+) is bound by residues H115, H119, and H125.

This sequence belongs to the endoribonuclease YbeY family. Zn(2+) serves as cofactor.

The protein localises to the cytoplasm. Single strand-specific metallo-endoribonuclease involved in late-stage 70S ribosome quality control and in maturation of the 3' terminus of the 16S rRNA. The polypeptide is Endoribonuclease YbeY (Mannheimia succiniciproducens (strain KCTC 0769BP / MBEL55E)).